We begin with the raw amino-acid sequence, 167 residues long: MAKFIDPDKLELEDNVVAINRITKVVKGGRRLRFAALVIVGDKNGHVGFGTGKAQEVPEAIRKAVEAARKNLIEVPIVGTTIPHEVLGTFGGGKIMLKPAAEGSGVTAGGAVRSVMELAGVADVTSKRLGSNTPVNAVRATFDGLTQLKRAEEVAALRGVSLQHLAE.

An S5 DRBM domain is found at 12–75 (LEDNVVAINR…EAARKNLIEV (64 aa)).

This sequence belongs to the universal ribosomal protein uS5 family. Part of the 30S ribosomal subunit. Contacts proteins S4 and S8.

In terms of biological role, with S4 and S12 plays an important role in translational accuracy. Its function is as follows. Located at the back of the 30S subunit body where it stabilizes the conformation of the head with respect to the body. The chain is Small ribosomal subunit protein uS5 from Levilactobacillus brevis (strain ATCC 367 / BCRC 12310 / CIP 105137 / JCM 1170 / LMG 11437 / NCIMB 947 / NCTC 947) (Lactobacillus brevis).